Reading from the N-terminus, the 800-residue chain is Fibroblast growth factor receptor 4 (800 aa).

Positions 1-16 (MWLLLALLSIFQETPA) are cleaved as a signal peptide. Ig-like C2-type domains are found at residues 17–115 (FSLE…LIMD), 148–236 (PQRM…YLLD), and 245–345 (PILQ…AWLT). Residues 17 to 367 (FSLEASEEME…TATSEARYTD (351 aa)) are Extracellular-facing. The cysteines at positions 54 and 98 are disulfide-linked. Asparagine 109 carries N-linked (GlcNAc...) asparagine glycosylation. Cysteines 168 and 220 form a disulfide. Residues asparagine 254, asparagine 286, and asparagine 307 are each glycosylated (N-linked (GlcNAc...) asparagine). A disulfide bridge connects residues cysteine 267 and cysteine 329. Residues 368-388 (IILYVSGSLALVLLLLLAGVY) traverse the membrane as a helical segment. At 389 to 800 (HRQAIHGHHS…PFPFPEAQTT (412 aa)) the chain is on the cytoplasmic side. One can recognise a Protein kinase domain in the interval 465-753 (LVLGKPLGEG…VLLAVSEEYL (289 aa)). Residues 471 to 479 (LGEGCFGQV) and lysine 501 each bind ATP. A Phosphoserine modification is found at serine 571. The Proton acceptor role is filled by aspartate 610. A phosphotyrosine; by autocatalysis mark is found at tyrosine 640, tyrosine 641, and tyrosine 752. The segment at 768–800 (DASSTCSSSDSVFSHDPLPLEPSPFPFPEAQTT) is disordered. Positions 770-781 (SSTCSSSDSVFS) are enriched in low complexity.

It belongs to the protein kinase superfamily. Tyr protein kinase family. Fibroblast growth factor receptor subfamily. In terms of assembly, monomer. Homodimer after ligand binding. Interacts with FGF1, FGF2, FGF4, FGF6, FGF8, FGF9, FGF16, FGF17, FGF18, FGF19, FGF21 and FGF23 (in vitro). Binding affinity for FGF family members is enhanced by interactions between FGFs and heparan sulfate proteoglycans. Interacts with KLB; this strongly increases the affinity for FGF19 and FGF23. Affinity for FGF19 is strongly increased by KLB and sulfated glycosaminoglycans. KLB and KL both interact with the core-glycosylated FGFR4 in the endoplasmic reticulum and promote its degradation, so that only FGFR4 with fully mature N-glycans is expressed at the cell surface. Identified in a complex with NCAM1, CDH2, PLCG1, FRS2, SRC, SHC1, GAP43 and CTTN. Interacts with MMP14 and HIP1. Interacts with STAT3. Post-translationally, N-glycosylated. Full maturation of the glycan chains in the Golgi is essential for high affinity interaction with FGF19. In terms of processing, ubiquitinated. Subject to proteasomal degradation when not fully glycosylated. Autophosphorylated. Binding of FGF family members together with heparan sulfate proteoglycan or heparin promotes receptor dimerization and autophosphorylation on tyrosine residues. Autophosphorylation occurs in trans between the two FGFR molecules present in the dimer.

The protein localises to the cell membrane. The protein resides in the endosome. It is found in the endoplasmic reticulum. The catalysed reaction is L-tyrosyl-[protein] + ATP = O-phospho-L-tyrosyl-[protein] + ADP + H(+). With respect to regulation, present in an inactive conformation in the absence of bound ligand. Ligand binding leads to dimerization and activation by autophosphorylation on tyrosine residues. In terms of biological role, tyrosine-protein kinase that acts as a cell-surface receptor for fibroblast growth factors and plays a role in the regulation of cell proliferation, differentiation and migration, and in regulation of lipid metabolism, bile acid biosynthesis, glucose uptake, vitamin D metabolism and phosphate homeostasis. Required for normal down-regulation of the expression of CYP7A1, the rate-limiting enzyme in bile acid synthesis, in response to FGF19. Phosphorylates PLCG1 and FRS2. Ligand binding leads to the activation of several signaling cascades. Activation of PLCG1 leads to the production of the cellular signaling molecules diacylglycerol and inositol 1,4,5-trisphosphate. Phosphorylation of FRS2 triggers recruitment of GRB2, GAB1, PIK3R1 and SOS1, and mediates activation of RAS, MAPK1/ERK2, MAPK3/ERK1 and the MAP kinase signaling pathway, as well as of the AKT1 signaling pathway. Promotes SRC-dependent phosphorylation of the matrix protease MMP14 and its lysosomal degradation. FGFR4 signaling is down-regulated by receptor internalization and degradation; MMP14 promotes internalization and degradation of FGFR4. The chain is Fibroblast growth factor receptor 4 (Fgfr4) from Rattus norvegicus (Rat).